A 177-amino-acid polypeptide reads, in one-letter code: Large ribosomal subunit protein uL6 (177 aa).

The protein belongs to the universal ribosomal protein uL6 family. In terms of assembly, part of the 50S ribosomal subunit.

Functionally, this protein binds to the 23S rRNA, and is important in its secondary structure. It is located near the subunit interface in the base of the L7/L12 stalk, and near the tRNA binding site of the peptidyltransferase center. This chain is Large ribosomal subunit protein uL6, found in Bartonella bacilliformis (strain ATCC 35685 / KC583 / Herrer 020/F12,63).